The sequence spans 140 residues: Large ribosomal subunit protein uL11 (140 aa).

Belongs to the universal ribosomal protein uL11 family. In terms of assembly, part of the ribosomal stalk of the 50S ribosomal subunit. Interacts with L10 and the large rRNA to form the base of the stalk. L10 forms an elongated spine to which L12 dimers bind in a sequential fashion forming a multimeric L10(L12)X complex. One or more lysine residues are methylated.

In terms of biological role, forms part of the ribosomal stalk which helps the ribosome interact with GTP-bound translation factors. The sequence is that of Large ribosomal subunit protein uL11 from Halothermothrix orenii (strain H 168 / OCM 544 / DSM 9562).